Consider the following 429-residue polypeptide: Phosphoribosylamine--glycine ligase (429 aa).

The ATP-grasp domain maps to 109–316 (KDFLARHQIP…LVDLCLAACD (208 aa)). ATP is bound at residue 135 to 196 (LREKGAPIVI…EEFLDGEEAS (62 aa)). Residues glutamate 286 and asparagine 288 each coordinate Mg(2+).

Belongs to the GARS family. As to quaternary structure, monomer. Mg(2+) is required as a cofactor. The cofactor is Mn(2+).

The enzyme catalyses 5-phospho-beta-D-ribosylamine + glycine + ATP = N(1)-(5-phospho-beta-D-ribosyl)glycinamide + ADP + phosphate + H(+). The protein operates within purine metabolism; IMP biosynthesis via de novo pathway; N(1)-(5-phospho-D-ribosyl)glycinamide from 5-phospho-alpha-D-ribose 1-diphosphate: step 2/2. This Salmonella typhi protein is Phosphoribosylamine--glycine ligase.